Consider the following 469-residue polypeptide: MSFSLRKLLVPILVLVLFLDLCVESGFSQSTPARDDHVHHHGGGCSHSHDHDHDHDHDHHVKKTTAKVEMKLPEELAEEEDMRLCGFGPCLHDHDHESSSTLTGFALWLNALGCSLLVSLASLICLVLLPIMFVQGKPSKWFVDSLALFGAGAMLGDAFLHQLPHAFGGGHSHSNDHHENHDHHDHSHSDSPSHSHSIQDLSVGLSVLAGIVVFLLVEKLVRYVEENSSGSNTWGHHHHHHHAGSKKLKDEGDHNNLDQQSSSDAIVNSSEKVSGGSTDKSLRKRKTSASDATDKSDSGTEITSDGKSDKPEQVETRSSSLVFGYLNLFSDGVHNFTDGMALGSAFLIYGSVGGWSRTMFLLAHELPQEIGDFGILVRSGFTVTKALFFNFLSALVALAGTALVLVWGNEPGQSSLIEGFTAGGFIYIAVAGVLAEMNNSGKSTLKNSACHLISLILGMSVALCISLIE.

The N-terminal stretch at 1–28 (MSFSLRKLLVPILVLVLFLDLCVESGFS) is a signal peptide. Positions 33–58 (ARDDHVHHHGGGCSHSHDHDHDHDHD) are disordered. Over residues 47–58 (HSHDHDHDHDHD) the composition is skewed to basic and acidic residues. A run of 2 helical transmembrane segments spans residues 114 to 134 (CSLLVSLASLICLVLLPIMFV) and 141 to 161 (WFVDSLALFGAGAMLGDAFLH). The interval 170-197 (GHSHSNDHHENHDHHDHSHSDSPSHSHS) is disordered. The span at 173 to 193 (HSNDHHENHDHHDHSHSDSPS) shows a compositional bias: basic and acidic residues. Residues 201-221 (LSVGLSVLAGIVVFLLVEKLV) form a helical membrane-spanning segment. The segment at 228–315 (SSGSNTWGHH…GKSDKPEQVE (88 aa)) is disordered. Basic residues predominate over residues 235–246 (GHHHHHHHAGSK). A compositionally biased stretch (basic and acidic residues) spans 247–256 (KLKDEGDHNN). The span at 257 to 279 (LDQQSSSDAIVNSSEKVSGGSTD) shows a compositional bias: polar residues. The span at 292–315 (ATDKSDSGTEITSDGKSDKPEQVE) shows a compositional bias: basic and acidic residues. The next 3 membrane-spanning stretches (helical) occupy residues 387 to 407 (LFFNFLSALVALAGTALVLVW), 415 to 435 (SLIEGFTAGGFIYIAVAGVLA), and 448 to 468 (SACHLISLILGMSVALCISLI).

This sequence belongs to the ZIP transporter (TC 2.A.5) family. KE4/Catsup subfamily.

Its subcellular location is the membrane. Functionally, may participate in auxin metabolism or response. Probable transporter. The sequence is that of IAA-alanine resistance protein 1 (IAR1) from Arabidopsis thaliana (Mouse-ear cress).